Consider the following 161-residue polypeptide: Endoribonuclease YbeY (161 aa).

The Zn(2+) site is built by H120, H124, and D130.

The protein belongs to the endoribonuclease YbeY family. Requires Zn(2+) as cofactor.

It is found in the cytoplasm. Functionally, single strand-specific metallo-endoribonuclease involved in late-stage 70S ribosome quality control and in maturation of the 3' terminus of the 16S rRNA. The sequence is that of Endoribonuclease YbeY from Chlamydia trachomatis serovar L2 (strain ATCC VR-902B / DSM 19102 / 434/Bu).